The chain runs to 445 residues: UPF0210 protein STER_0157 (445 aa).

This sequence belongs to the UPF0210 family. In terms of assembly, homodimer.

This chain is UPF0210 protein STER_0157, found in Streptococcus thermophilus (strain ATCC BAA-491 / LMD-9).